The following is a 103-amino-acid chain: MKSLVLLAILAALAVVTLCYESHESMESYELNPFINRRNANIFISPQQRWRAKVQERIRERSKPVHELNREACDDYRLCERYAMVYGYNAAYNRYFRERRGAK.

A signal peptide spans 1–19; the sequence is MKSLVLLAILAALAVVTLC. The residue at position 21 (glutamate 21) is a 4-carboxyglutamate. Phosphoserine is present on residues serine 22, serine 25, and serine 28. The 47-residue stretch at 51 to 97 folds into the Gla domain; the sequence is RAKVQERIRERSKPVHELNREACDDYRLCERYAMVYGYNAAYNRYFR. Residues glutamate 56, glutamate 60, glutamate 67, and glutamate 71 each carry the 4-carboxyglutamate modification. Cysteines 73 and 79 form a disulfide. Residues 97 to 103 constitute a propeptide, removed in mature form; probably by carboxypeptidase N; that stretch reads RERRGAK.

This sequence belongs to the osteocalcin/matrix Gla protein family. Requires vitamin K-dependent gamma-carboxylation for its function.

The protein localises to the secreted. In terms of biological role, associates with the organic matrix of bone and cartilage. Thought to act as an inhibitor of bone formation. This chain is Matrix Gla protein (MGP), found in Pongo abelii (Sumatran orangutan).